A 166-amino-acid chain; its full sequence is Methylmalonyl-CoA epimerase, mitochondrial (166 aa).

Residues 1–23 (MFKQLIKTTLTNSRSFSTNTGSG) constitute a mitochondrion transit peptide. Positions 37 to 166 (KLNHVAIATP…NGVLVELEEK (130 aa)) constitute a VOC domain. Residues histidine 40, histidine 112, and glutamate 162 each contribute to the Co(2+) site.

The protein belongs to the methylmalonyl-CoA epimerase family.

It is found in the mitochondrion. The catalysed reaction is (R)-methylmalonyl-CoA = (S)-methylmalonyl-CoA. Functionally, methylmalonyl-CoA epimerase involved in propionyl-CoA metabolism. This Dictyostelium discoideum (Social amoeba) protein is Methylmalonyl-CoA epimerase, mitochondrial (mcee).